Reading from the N-terminus, the 339-residue chain is DNA-directed RNA polymerase subunit alpha (339 aa).

Residues 1 to 235 form an alpha N-terminal domain (alpha-NTD) region; that stretch reads MVREEVAVST…DLFIPFLHGE (235 aa). Positions 267–339 are alpha C-terminal domain (alpha-CTD); sequence KAIALECIFI…FTIDLPKNKF (73 aa).

This sequence belongs to the RNA polymerase alpha chain family. As to quaternary structure, in plastids the minimal PEP RNA polymerase catalytic core is composed of four subunits: alpha, beta, beta', and beta''. When a (nuclear-encoded) sigma factor is associated with the core the holoenzyme is formed, which can initiate transcription.

Its subcellular location is the plastid. The protein resides in the chloroplast. It carries out the reaction RNA(n) + a ribonucleoside 5'-triphosphate = RNA(n+1) + diphosphate. Its function is as follows. DNA-dependent RNA polymerase catalyzes the transcription of DNA into RNA using the four ribonucleoside triphosphates as substrates. This is DNA-directed RNA polymerase subunit alpha from Drimys granadensis.